A 360-amino-acid chain; its full sequence is MKIGVIGGGQLGRMLALAGTPLGMNFAFLDPAPDACAASLGEHIRADYGDQEHLRQLADEVDLVTFEFESVPAETVAFLSQFVPVYPNAESLRIARDRWFEKSMFKDLGIPTPDFADVQSQADLDAAAAAIGLPAVLKTRTLGYDGKGQKVLRQPADVQGAFAELGSVPCILEGFVPFTGEVSLVAVRARDGETRFYPLVHNTHDSGILKLSVASSGHPLQALAEDYVGRVLARLDYVGVLAFEFFEVDGGLKANEIAPRVHNSGHWTIEGAECSQFENHLRAVAGLPLGSTAKVGESAMLNFIGAVPPVAQVVAVADCHLHHYGKAFKNGRKVGHATLRCADRATLQARIAEVEALIEA.

ATP-binding positions include Arg98, Lys138, 143–149 (GYDGKGQ), 173–176 (EGFV), Glu181, His204, and 255–256 (NE). One can recognise an ATP-grasp domain in the interval 102–285 (KSMFKDLGIP…QFENHLRAVA (184 aa)).

Belongs to the PurK/PurT family. As to quaternary structure, homodimer.

It carries out the reaction 5-amino-1-(5-phospho-beta-D-ribosyl)imidazole + hydrogencarbonate + ATP = 5-carboxyamino-1-(5-phospho-D-ribosyl)imidazole + ADP + phosphate + 2 H(+). It participates in purine metabolism; IMP biosynthesis via de novo pathway; 5-amino-1-(5-phospho-D-ribosyl)imidazole-4-carboxylate from 5-amino-1-(5-phospho-D-ribosyl)imidazole (N5-CAIR route): step 1/2. Its function is as follows. Catalyzes the ATP-dependent conversion of 5-aminoimidazole ribonucleotide (AIR) and HCO(3)(-) to N5-carboxyaminoimidazole ribonucleotide (N5-CAIR). The sequence is that of N5-carboxyaminoimidazole ribonucleotide synthase from Pseudomonas aeruginosa (strain ATCC 15692 / DSM 22644 / CIP 104116 / JCM 14847 / LMG 12228 / 1C / PRS 101 / PAO1).